Reading from the N-terminus, the 234-residue chain is Glucosamine-6-phosphate deaminase (234 aa).

The active-site Proton acceptor; for enolization step is Asp62. Asn128 serves as the catalytic For ring-opening step. The active-site Proton acceptor; for ring-opening step is the His130. The active-site For ring-opening step is Glu135.

Belongs to the glucosamine/galactosamine-6-phosphate isomerase family. NagB subfamily.

It carries out the reaction alpha-D-glucosamine 6-phosphate + H2O = beta-D-fructose 6-phosphate + NH4(+). The protein operates within amino-sugar metabolism; N-acetylneuraminate degradation; D-fructose 6-phosphate from N-acetylneuraminate: step 5/5. Its function is as follows. Catalyzes the reversible isomerization-deamination of glucosamine 6-phosphate (GlcN6P) to form fructose 6-phosphate (Fru6P) and ammonium ion. The protein is Glucosamine-6-phosphate deaminase of Streptococcus suis (strain 98HAH33).